A 133-amino-acid polypeptide reads, in one-letter code: UPF0292 protein TON_0187 (133 aa).

One can recognise a Toprim domain in the interval glutamate 20–leucine 100. Residues glutamate 26, aspartate 69, and aspartate 71 each coordinate Mg(2+).

The protein belongs to the UPF0292 family. Mg(2+) is required as a cofactor.

The chain is UPF0292 protein TON_0187 from Thermococcus onnurineus (strain NA1).